The primary structure comprises 134 residues: ATP synthase epsilon chain (134 aa).

This sequence belongs to the ATPase epsilon chain family. F-type ATPases have 2 components, CF(1) - the catalytic core - and CF(0) - the membrane proton channel. CF(1) has five subunits: alpha(3), beta(3), gamma(1), delta(1), epsilon(1). CF(0) has three main subunits: a, b and c.

It is found in the cell inner membrane. Functionally, produces ATP from ADP in the presence of a proton gradient across the membrane. The sequence is that of ATP synthase epsilon chain from Rhodospirillum rubrum (strain ATCC 11170 / ATH 1.1.1 / DSM 467 / LMG 4362 / NCIMB 8255 / S1).